A 228-amino-acid chain; its full sequence is Clathrin light chain B (228 aa).

Methionine 1 bears the Blocked amino end (Met) mark. Residues 1–17 (MADDFGFFSSSESGAPE) are compositionally biased toward low complexity. Residues 1–80 (MADDFGFFSS…VNGDVFQEAN (80 aa)) form a disordered region. Residues serine 11 and serine 13 each carry the phosphoserine modification. Residues 92–154 (ADRLTQEPES…QVEKNKINNR (63 aa)) form an involved in binding clathrin heavy chain region. Threonine 186 bears the Phosphothreonine mark. Residues cysteine 198 and cysteine 208 are joined by a disulfide bond. N6-acetyllysine is present on lysine 203. Serine 216 is subject to Phosphoserine.

The protein belongs to the clathrin light chain family. Clathrin coats are formed from molecules containing 3 heavy chains and 3 light chains. Interacts (via N-terminus) with HIP1. Interacts with HIP1R.

It is found in the cytoplasmic vesicle membrane. The protein resides in the membrane. Its subcellular location is the coated pit. Functionally, clathrin is the major protein of the polyhedral coat of coated pits and vesicles. The sequence is that of Clathrin light chain B (CLTB) from Bos taurus (Bovine).